A 119-amino-acid chain; its full sequence is Large ribosomal subunit protein bL20 (119 aa).

This sequence belongs to the bacterial ribosomal protein bL20 family.

Its function is as follows. Binds directly to 23S ribosomal RNA and is necessary for the in vitro assembly process of the 50S ribosomal subunit. It is not involved in the protein synthesizing functions of that subunit. The chain is Large ribosomal subunit protein bL20 from Halorhodospira halophila (strain DSM 244 / SL1) (Ectothiorhodospira halophila (strain DSM 244 / SL1)).